Reading from the N-terminus, the 288-residue chain is Bifunctional protein FolD (288 aa).

Residues 166-168 and I232 each bind NADP(+); that span reads GAS.

It belongs to the tetrahydrofolate dehydrogenase/cyclohydrolase family. As to quaternary structure, homodimer.

The catalysed reaction is (6R)-5,10-methylene-5,6,7,8-tetrahydrofolate + NADP(+) = (6R)-5,10-methenyltetrahydrofolate + NADPH. The enzyme catalyses (6R)-5,10-methenyltetrahydrofolate + H2O = (6R)-10-formyltetrahydrofolate + H(+). Its pathway is one-carbon metabolism; tetrahydrofolate interconversion. Functionally, catalyzes the oxidation of 5,10-methylenetetrahydrofolate to 5,10-methenyltetrahydrofolate and then the hydrolysis of 5,10-methenyltetrahydrofolate to 10-formyltetrahydrofolate. This chain is Bifunctional protein FolD, found in Citrobacter koseri (strain ATCC BAA-895 / CDC 4225-83 / SGSC4696).